The sequence spans 64 residues: Small ribosomal subunit protein bS21 (64 aa).

Residues Glu-39–Phe-64 form a disordered region. A compositionally biased stretch (basic residues) spans Val-43 to Phe-64.

Belongs to the bacterial ribosomal protein bS21 family.

The polypeptide is Small ribosomal subunit protein bS21 (rpsU) (Myxococcus xanthus).